A 571-amino-acid polypeptide reads, in one-letter code: 2-succinyl-5-enolpyruvyl-6-hydroxy-3-cyclohexene-1-carboxylate synthase (571 aa).

This sequence belongs to the TPP enzyme family. MenD subfamily. As to quaternary structure, homodimer. Mg(2+) is required as a cofactor. Mn(2+) serves as cofactor. Requires thiamine diphosphate as cofactor.

It catalyses the reaction isochorismate + 2-oxoglutarate + H(+) = 5-enolpyruvoyl-6-hydroxy-2-succinyl-cyclohex-3-ene-1-carboxylate + CO2. It participates in quinol/quinone metabolism; 1,4-dihydroxy-2-naphthoate biosynthesis; 1,4-dihydroxy-2-naphthoate from chorismate: step 2/7. Its pathway is quinol/quinone metabolism; menaquinone biosynthesis. Its function is as follows. Catalyzes the thiamine diphosphate-dependent decarboxylation of 2-oxoglutarate and the subsequent addition of the resulting succinic semialdehyde-thiamine pyrophosphate anion to isochorismate to yield 2-succinyl-5-enolpyruvyl-6-hydroxy-3-cyclohexene-1-carboxylate (SEPHCHC). This Lysinibacillus sphaericus (strain C3-41) protein is 2-succinyl-5-enolpyruvyl-6-hydroxy-3-cyclohexene-1-carboxylate synthase.